Here is a 517-residue protein sequence, read N- to C-terminus: Nucleoside transporter FUN26 (517 aa).

Positions 1–63 (MSTSADTDTI…EREQSVSTEP (63 aa)) are disordered. Residues 25–44 (THSEEISRSGEEHESENNEH) are compositionally biased toward basic and acidic residues. Phosphoserine is present on residues Ser-45 and Ser-58. 11 helical membrane-spanning segments follow: residues 76–96 (LSYI…NCIL), 116–136 (IFTS…NIYL), 151–171 (LVWE…HFLL), 174–194 (WFNF…TAMT), 214–234 (MVGQ…LAFI), 243–263 (GGIL…VVMF), 344–364 (LVLS…FASA), 367–387 (VTGL…LWNL), 411–431 (TFIY…FTAI), 446–466 (IVDL…GHVI), and 492–512 (IFVS…VFII).

This sequence belongs to the SLC29A/ENT transporter (TC 2.A.57) family.

It localises to the membrane. Functionally, has broad nucleoside selectivity (uridine, adenosine and cytidine) and most likely functions to transport nucleosides across intracellular membranes. This chain is Nucleoside transporter FUN26 (FUN26), found in Saccharomyces cerevisiae (strain ATCC 204508 / S288c) (Baker's yeast).